The sequence spans 66 residues: Large ribosomal subunit protein bL31 (66 aa).

4 residues coordinate Zn(2+): C16, C18, C36, and C39.

The protein belongs to the bacterial ribosomal protein bL31 family. Type A subfamily. As to quaternary structure, part of the 50S ribosomal subunit. Requires Zn(2+) as cofactor.

In terms of biological role, binds the 23S rRNA. This chain is Large ribosomal subunit protein bL31, found in Leptospira biflexa serovar Patoc (strain Patoc 1 / Ames).